The sequence spans 365 residues: Putative nudix hydrolase 1 (365 aa).

Residues 72 to 201 (VNYVAAAIIL…DFIRLVDEAV (130 aa)) enclose the Nudix hydrolase domain. Residues 109–130 (GRVEAGETIEEAVVREVKEETG) carry the Nudix box motif. Residues glutamate 124 and glutamate 128 each contribute to the Mg(2+) site.

It belongs to the Nudix hydrolase family. Mg(2+) is required as a cofactor. Mn(2+) serves as cofactor.

Functionally, probably mediates the hydrolysis of some nucleoside diphosphate derivatives. The chain is Putative nudix hydrolase 1 (ndx-1) from Caenorhabditis elegans.